Reading from the N-terminus, the 434-residue chain is E3 ubiquitin-protein transferase MAEA (434 aa).

The interval 1 to 124 is extracellular and involved in cell to cell contact; it reads MAVQESAAQL…AAASVWKRKR (124 aa). Thr28 is subject to Phosphothreonine. One can recognise a LisH domain in the interval 121-153; that stretch reads KRKRMDRMMVEHLLRCGYYNTAVKLARQSGIED. The region spanning 159 to 254 is the CTLH domain; that stretch reads MFLTAKEVEE…ELIRQNKRLD (96 aa). The segment at 190–222 is disordered; that stretch reads RKMKGRQSEHDAKTGRKSRVASGSPKESEDLGM. The segment at 352–419 adopts an RING-Gid-type zinc-finger fold; it reads CPVCSRSLNK…QDDKVVCPRT (68 aa).

In terms of assembly, identified in the CTLH complex that contains GID4, RANBP9 and/or RANBP10, MKLN1, MAEA, RMND5A (or alternatively its paralog RMND5B), GID8, ARMC8, WDR26 and YPEL5. Within this complex, MAEA, RMND5A (or alternatively its paralog RMND5B), GID8, WDR26, and RANBP9 and/or RANBP10 form the catalytic core, while GID4, MKLN1, ARMC8 and YPEL5 have ancillary roles. Interacts with F-actin. Post-translationally, autoubiquitinated as component of the CTLH E3 ubiquitin-protein ligase complex (in vitro).

The protein localises to the cytoplasm. The protein resides in the nucleus. Its subcellular location is the nucleoplasm. It is found in the nucleus matrix. It localises to the cell membrane. The protein localises to the cytoskeleton. The enzyme catalyses S-ubiquitinyl-[E2 ubiquitin-conjugating enzyme]-L-cysteine + [acceptor protein]-L-lysine = [E2 ubiquitin-conjugating enzyme]-L-cysteine + N(6)-ubiquitinyl-[acceptor protein]-L-lysine.. In terms of biological role, core component of the CTLH E3 ubiquitin-protein ligase complex that selectively accepts ubiquitin from UBE2H and mediates ubiquitination and subsequent proteasomal degradation of the transcription factor HBP1. MAEA and RMND5A are both required for catalytic activity of the CTLH E3 ubiquitin-protein ligase complex. MAEA is required for normal cell proliferation. The CTLH E3 ubiquitin-protein ligase complex is not required for the degradation of enzymes involved in gluconeogenesis, such as FBP1. Plays a role in erythroblast enucleation during erythrocyte maturation and in the development of mature macrophages. Mediates the attachment of erythroid cell to mature macrophages; this MAEA-mediated contact inhibits erythroid cell apoptosis. Participates in erythroblastic island formation, which is the functional unit of definitive erythropoiesis. Associates with F-actin to regulate actin distribution in erythroblasts and macrophages. May contribute to nuclear architecture and cells division events. The protein is E3 ubiquitin-protein transferase MAEA (MAEA) of Bos taurus (Bovine).